A 956-amino-acid polypeptide reads, in one-letter code: Glutamate receptor ionotropic, kainate 4 (956 aa).

A signal peptide spans 1–20 (MPRVSAPLVLLPAWLLMVAC). Residues 21–545 (SPHSLRIAAI…YFSFLDPFSP (525 aa)) lie on the Extracellular side of the membrane. Residues asparagine 158, asparagine 220, asparagine 272, asparagine 286, asparagine 323, asparagine 408, asparagine 415, and asparagine 479 are each glycosylated (N-linked (GlcNAc...) asparagine). Residues glycine 500, threonine 502, and arginine 507 each contribute to the L-glutamate site. A helical membrane pass occupies residues 546-566 (GVWLFMLLAYLAVSCVLFLVA). Residues 567 to 623 (RLTPYEWYSPHPCAQGRCNLLVNQYSLGNSLWFPVGGFMQQGSTIAPRALSTRCVSG) lie on the Cytoplasmic side of the membrane. A helical membrane pass occupies residues 624–644 (VWWAFTLIIISSYTANLAAFL). Over 645-804 (TVQRMEVPIE…HRAKGLGMEN (160 aa)) the chain is Extracellular. L-glutamate is bound by residues serine 674, serine 675, and glutamate 723. N-linked (GlcNAc...) asparagine glycosylation is present at asparagine 736. The helical transmembrane segment at 805 to 825 (IGGIFVVLICGLIVAIFMAML) threads the bilayer. At 826 to 956 (EFLWTLRHSE…DKTTNSSEPE (131 aa)) the chain is on the cytoplasmic side. Residues 931 to 956 (LRARPSPARSEESLEWDKTTNSSEPE) are disordered. Positions 939–948 (RSEESLEWDK) are enriched in basic and acidic residues.

Belongs to the glutamate-gated ion channel (TC 1.A.10.1) family. GRIK4 subfamily. In terms of assembly, homodimer. Can form functional heteromeric receptors with GRIK1, GRIK2 and GRIK3 subunits. Forms a heteromeric complex with GRIK2. As to expression, expressed in the hippocampus and cerebellum (at protein level).

It localises to the cell membrane. The protein resides in the postsynaptic cell membrane. It is found in the presynaptic cell membrane. Ionotropic glutamate receptor that functions as a cation-permeable ligand-gated ion channel. Cannot form functional channels on its own and produces channel activity only in heteromeric assembly with GRIK1, GRIK2 and GRIK3 subunits. The protein is Glutamate receptor ionotropic, kainate 4 (Grik4) of Mus musculus (Mouse).